We begin with the raw amino-acid sequence, 487 residues long: Probable glycine dehydrogenase (decarboxylating) subunit 2 (487 aa).

K269 carries the N6-(pyridoxal phosphate)lysine modification.

This sequence belongs to the GcvP family. C-terminal subunit subfamily. As to quaternary structure, the glycine cleavage system is composed of four proteins: P, T, L and H. In this organism, the P 'protein' is a heterodimer of two subunits. The cofactor is pyridoxal 5'-phosphate.

The catalysed reaction is N(6)-[(R)-lipoyl]-L-lysyl-[glycine-cleavage complex H protein] + glycine + H(+) = N(6)-[(R)-S(8)-aminomethyldihydrolipoyl]-L-lysyl-[glycine-cleavage complex H protein] + CO2. Functionally, the glycine cleavage system catalyzes the degradation of glycine. The P protein binds the alpha-amino group of glycine through its pyridoxal phosphate cofactor; CO(2) is released and the remaining methylamine moiety is then transferred to the lipoamide cofactor of the H protein. The protein is Probable glycine dehydrogenase (decarboxylating) subunit 2 of Prosthecochloris aestuarii (strain DSM 271 / SK 413).